The sequence spans 92 residues: Large ribosomal subunit protein eL31 (92 aa).

This sequence belongs to the eukaryotic ribosomal protein eL31 family.

This chain is Large ribosomal subunit protein eL31, found in Halobacterium salinarum (strain ATCC 29341 / DSM 671 / R1).